The chain runs to 70 residues: Turripeptide Gsp9.3 (70 aa).

A signal peptide spans 1–20; the sequence is MKVYCLLLVLLVGLVSQAHG. The Kazal-like domain occupies 21-70; it reads QLDKKCQMVCTFDYRPVCGSDGRTYPNKCTLTSTACMSQRSITVFHDGEC. 3 cysteine pairs are disulfide-bonded: Cys-26/Cys-56, Cys-30/Cys-49, and Cys-38/Cys-70.

This sequence belongs to the conopeptide P-like superfamily. In terms of tissue distribution, expressed by the venom duct.

Its subcellular location is the secreted. Functionally, acts as a neurotoxin by inhibiting an ion channel. May also act as a serine protease inhibitor, since it possess the kazal serine protease inhibitor signature. This Gemmula speciosa (Splendid gem-turris) protein is Turripeptide Gsp9.3.